Consider the following 367-residue polypeptide: Glutamate 5-kinase (367 aa).

Lys-10 contacts ATP. Substrate-binding residues include Ser-50, Asp-137, and Asn-149. ATP contacts are provided by residues 169–170 and 211–217; these read TD and TGGMSTK. The 79-residue stretch at 275–353 folds into the PUA domain; the sequence is AGEITVDEGA…QQIDAILGYE (79 aa).

This sequence belongs to the glutamate 5-kinase family.

Its subcellular location is the cytoplasm. The enzyme catalyses L-glutamate + ATP = L-glutamyl 5-phosphate + ADP. Its pathway is amino-acid biosynthesis; L-proline biosynthesis; L-glutamate 5-semialdehyde from L-glutamate: step 1/2. Catalyzes the transfer of a phosphate group to glutamate to form L-glutamate 5-phosphate. The sequence is that of Glutamate 5-kinase from Salmonella paratyphi A (strain ATCC 9150 / SARB42).